A 192-amino-acid chain; its full sequence is PTS-dependent dihydroxyacetone kinase, ADP-binding subunit DhaL (192 aa).

One can recognise a DhaL domain in the interval 5–189 (DTTIEWLGKF…SAYLFETLLE (185 aa)). The Mg(2+) site is built by Asp29, Asp34, and Asp36. Residues 37-40 (HGAN), 78-79 (AS), Gly115, Met124, Arg161, and 174-176 (DPG) contribute to the ADP site.

In terms of assembly, homodimer. The dihydroxyacetone kinase complex is composed of a homodimer of DhaM, a homodimer of DhaK and the subunit DhaL. Mg(2+) is required as a cofactor.

The protein localises to the cytoplasm. The enzyme catalyses dihydroxyacetone + phosphoenolpyruvate = dihydroxyacetone phosphate + pyruvate. Its pathway is polyol metabolism; glycerol degradation. Functionally, ADP-binding subunit of the dihydroxyacetone kinase, which is responsible for the phosphoenolpyruvate (PEP)-dependent phosphorylation of dihydroxyacetone. DhaL-ADP is converted to DhaL-ATP via a phosphoryl group transfer from DhaM and transmits it to dihydroxyacetone binds to DhaK. This chain is PTS-dependent dihydroxyacetone kinase, ADP-binding subunit DhaL, found in Lactococcus lactis subsp. lactis (strain IL1403) (Streptococcus lactis).